A 217-amino-acid chain; its full sequence is Ribonuclease HII (217 aa).

One can recognise an RNase H type-2 domain in the interval 26 to 215 (EIVCGVDEAG…VREALDLMAG (190 aa)). Positions 32, 33, and 124 each coordinate a divalent metal cation.

This sequence belongs to the RNase HII family. Requires Mn(2+) as cofactor. Mg(2+) is required as a cofactor.

The protein resides in the cytoplasm. It catalyses the reaction Endonucleolytic cleavage to 5'-phosphomonoester.. Functionally, endonuclease that specifically degrades the RNA of RNA-DNA hybrids. The protein is Ribonuclease HII of Burkholderia ambifaria (strain ATCC BAA-244 / DSM 16087 / CCUG 44356 / LMG 19182 / AMMD) (Burkholderia cepacia (strain AMMD)).